Reading from the N-terminus, the 96-residue chain is uncharacterized protein (96 aa).

The stretch at 9-86 forms a coiled coil; sequence EELKSQAQVY…NKYADTVAER (78 aa).

The protein belongs to the WXG100 family. sagEsxA-like subfamily.

This is an uncharacterized protein from Clostridium acetobutylicum (strain ATCC 824 / DSM 792 / JCM 1419 / IAM 19013 / LMG 5710 / NBRC 13948 / NRRL B-527 / VKM B-1787 / 2291 / W).